Consider the following 26-residue polypeptide: Cytochrome c oxidase subunit 2 (26 aa).

Belongs to the cytochrome c oxidase subunit 2 family. In terms of assembly, component of the cytochrome c oxidase (complex IV, CIV), a multisubunit enzyme composed of a catalytic core of 3 subunits and several supernumerary subunits. The complex exists as a monomer or a dimer and forms supercomplexes (SCs) in the inner mitochondrial membrane with ubiquinol-cytochrome c oxidoreductase (cytochrome b-c1 complex, complex III, CIII). Cu cation is required as a cofactor.

Its subcellular location is the mitochondrion inner membrane. It catalyses the reaction 4 Fe(II)-[cytochrome c] + O2 + 8 H(+)(in) = 4 Fe(III)-[cytochrome c] + 2 H2O + 4 H(+)(out). Component of the cytochrome c oxidase, the last enzyme in the mitochondrial electron transport chain which drives oxidative phosphorylation. The respiratory chain contains 3 multisubunit complexes succinate dehydrogenase (complex II, CII), ubiquinol-cytochrome c oxidoreductase (cytochrome b-c1 complex, complex III, CIII) and cytochrome c oxidase (complex IV, CIV), that cooperate to transfer electrons derived from NADH and succinate to molecular oxygen, creating an electrochemical gradient over the inner membrane that drives transmembrane transport and the ATP synthase. Cytochrome c oxidase is the component of the respiratory chain that catalyzes the reduction of oxygen to water. Electrons originating from reduced cytochrome c in the intermembrane space (IMS) are transferred via the dinuclear copper A center (CU(A)) of subunit 2 and heme A of subunit 1 to the active site in subunit 1, a binuclear center (BNC) formed by heme A3 and copper B (CU(B)). The BNC reduces molecular oxygen to 2 water molecules using 4 electrons from cytochrome c in the IMS and 4 protons from the mitochondrial matrix. The sequence is that of Cytochrome c oxidase subunit 2 (COX2) from Solanum tuberosum (Potato).